We begin with the raw amino-acid sequence, 275 residues long: Notch homolog 2 N-terminal-like protein B (275 aa).

The first 25 residues, 1–25 (MPALRPALLWALLALWLCCATPAHA), serve as a signal peptide directing secretion. 4 consecutive EGF-like domains span residues 26–63 (LQCR…EYCQ), 64–102 (HRDP…EDCQ), 105–143 (TSHP…KECQ), and 144–180 (WTDA…QKCE). Intrachain disulfides connect C28–C41, C35–C51, C53–C62, C68–C79, C73–C90, C92–C101, C109–C121, C115–C131, C133–C142, C148–C159, C153–C168, C170–C179, C186–C198, C192–C207, C209–C218, C225–C236, and C230–C246. N-linked (GlcNAc...) asparagine glycosylation occurs at N46. The N-linked (GlcNAc...) asparagine glycan is linked to N155. The region spanning 182–219 (DVNECDIPGHCQHGGICLNLPGSYQCQCLQGFTGQYCD) is the EGF-like 5; calcium-binding domain. In terms of domain architecture, EGF-like 6 spans 221-258 (LYVPCAPSPCVNGGTCRQTGDFTFECNCLPETVRRGTE).

Belongs to the NOTCH family. Interacts with NOTCH2. Interacts with DLL1; the interaction is direct. As to expression, expressed in radial glia neural stem cells during cortical development.

It is found in the secreted. Its function is as follows. Human-specific protein that promotes neural progenitor proliferation and evolutionary expansion of the brain neocortex by regulating the Notch signaling pathway. Able to promote neural progenitor self-renewal, possibly by down-regulating neuronal differentiation genes, thereby delaying the differentiation of neuronal progenitors and leading to an overall final increase in neuronal production. Acts by enhancing the Notch signaling pathway via two different mechanisms that probably work in parallel to reach the same effect. Enhances Notch signaling pathway in a non-cell-autonomous manner via direct interaction with NOTCH2. Also promotes Notch signaling pathway in a cell-autonomous manner through inhibition of cis DLL1-NOTCH2 interactions, which promotes neuronal differentiation. This Homo sapiens (Human) protein is Notch homolog 2 N-terminal-like protein B.